The primary structure comprises 555 residues: Glucose-6-phosphate isomerase (555 aa).

D-glucose 6-phosphate is bound by residues 169 to 170 (GS), 219 to 224 (SKTFTT), glutamine 364, glutamate 368, histidine 399, and lysine 521. Glutamate 368 functions as the Proton donor in the catalytic mechanism. Residues histidine 399 and lysine 521 contribute to the active site.

The protein belongs to the GPI family. Homodimer.

Its subcellular location is the cytoplasm. The protein localises to the cytosol. The enzyme catalyses alpha-D-glucose 6-phosphate = beta-D-fructose 6-phosphate. Its pathway is carbohydrate degradation; glycolysis; D-glyceraldehyde 3-phosphate and glycerone phosphate from D-glucose: step 2/4. In terms of biological role, in the cytoplasm, catalyzes the conversion of glucose-6-phosphate to fructose-6-phosphate, the second step in glycolysis, and the reverse reaction during gluconeogenesis. This is Glucose-6-phosphate isomerase (PGI1) from Candida glabrata (strain ATCC 2001 / BCRC 20586 / JCM 3761 / NBRC 0622 / NRRL Y-65 / CBS 138) (Yeast).